A 487-amino-acid polypeptide reads, in one-letter code: GTPase Der (487 aa).

EngA-type G domains lie at 3-166 and 193-366; these read PVIA…PRDA and IKIA…KSAV. Residues 9-16, 56-60, 118-121, 199-206, 246-250, and 311-314 contribute to the GTP site; these read GRPNVGKS, DTGGI, NKID, DTAGV, and NKWD. One can recognise a KH-like domain in the interval 367–451; it reads TRWPTSRLTQ…PIRIEYKGGE (85 aa). Positions 448-461 are enriched in basic and acidic residues; that stretch reads KGGENPYEGKKNTL. Positions 448 to 487 are disordered; that stretch reads KGGENPYEGKKNTLTDRQVNKKRRLMSHHKKAEKKRRDKR. A compositionally biased stretch (basic residues) spans 467 to 487; the sequence is NKKRRLMSHHKKAEKKRRDKR.

Belongs to the TRAFAC class TrmE-Era-EngA-EngB-Septin-like GTPase superfamily. EngA (Der) GTPase family. As to quaternary structure, associates with the 50S ribosomal subunit.

Functionally, GTPase that plays an essential role in the late steps of ribosome biogenesis. In Pseudomonas putida (strain W619), this protein is GTPase Der.